The primary structure comprises 402 residues: Multidrug resistance protein MdtH (402 aa).

Residues 1 to 12 are Cytoplasmic-facing; sequence MSRVSQARNLGK. The helical transmembrane segment at 13 to 33 threads the bilayer; that stretch reads YFLLIDNMLVVLGFFVVFPLI. Topologically, residues 34–98 are periplasmic; sequence SIRFVDQMGW…GFATMGIAHE (65 aa). Residues 99 to 116 form a helical membrane-spanning segment; the sequence is PWLLWFSCLLSGLGGTLF. Topologically, residues 117–138 are cytoplasmic; that stretch reads DPPRSALVVKLIRPQQRGRFFS. The chain crosses the membrane as a helical span at residues 139–159; the sequence is LLMMQDSAGAVIGALLGSWLL. Over 160–164 the chain is Periplasmic; the sequence is QYDFR. Residues 165-185 traverse the membrane as a helical segment; it reads LVCATGAVLFVLCAAFNAWLL. Over 186-213 the chain is Cytoplasmic; the sequence is PAWKLSTVRTPVREGMTRVMRDKRFVTY. The chain crosses the membrane as a helical span at residues 214-234; the sequence is VLTLAGYYMLAVQVMLMLPIM. At 235-243 the chain is on the periplasmic side; sequence VNDVAGAPS. Residues 244–264 form a helical membrane-spanning segment; it reads AVKWMYAIEACLSLTLLYPIA. The Cytoplasmic portion of the chain corresponds to 265-276; it reads RWSEKHFRLEHR. The chain crosses the membrane as a helical span at residues 277–297; the sequence is LMAGLLIMSLSMMPVGMVSGL. At 298-299 the chain is on the periplasmic side; the sequence is QQ. A helical transmembrane segment spans residues 300–320; it reads LFNLICLFYIGSIIAEPARET. Residues 321–339 lie on the Cytoplasmic side of the membrane; sequence LSASLADARARGSYMGFSR. Residues 340–360 form a helical membrane-spanning segment; that stretch reads LGLAIGGAIGYIGGGWLFDLG. Residues 361-367 are Periplasmic-facing; that stretch reads KSAHQPE. Residues 368–388 form a helical membrane-spanning segment; it reads LPWMMLGIIGIFTFLALGWQF. The Cytoplasmic portion of the chain corresponds to 389–402; the sequence is SQKRAARRLLERDA.

This sequence belongs to the major facilitator superfamily. DHA1 family. MdtH (TC 2.A.1.2.21) subfamily.

It is found in the cell inner membrane. Functionally, confers resistance to norfloxacin and enoxacin. The chain is Multidrug resistance protein MdtH from Escherichia coli O9:H4 (strain HS).